The sequence spans 222 residues: dTTP/UTP pyrophosphatase (222 aa).

Residue aspartate 83 is the Proton acceptor of the active site.

Belongs to the Maf family. YhdE subfamily. A divalent metal cation serves as cofactor.

The protein resides in the cytoplasm. The catalysed reaction is dTTP + H2O = dTMP + diphosphate + H(+). It carries out the reaction UTP + H2O = UMP + diphosphate + H(+). In terms of biological role, nucleoside triphosphate pyrophosphatase that hydrolyzes dTTP and UTP. May have a dual role in cell division arrest and in preventing the incorporation of modified nucleotides into cellular nucleic acids. This Desulfitobacterium hafniense (strain Y51) protein is dTTP/UTP pyrophosphatase.